The primary structure comprises 429 residues: Adenylosuccinate synthetase (429 aa).

GTP is bound by residues 12-18 (GDEGKGK) and 40-42 (GHT). Asp-13 acts as the Proton acceptor in catalysis. Mg(2+)-binding residues include Asp-13 and Gly-40. Residues 13 to 16 (DEGK), 38 to 41 (NAGH), Thr-128, Arg-142, Gln-223, Thr-238, and Arg-302 each bind IMP. His-41 serves as the catalytic Proton donor. 298-304 (VNTGRPR) serves as a coordination point for substrate. GTP-binding positions include Arg-304, 330-332 (KLD), and 412-414 (GVG).

Belongs to the adenylosuccinate synthetase family. In terms of assembly, homodimer. Requires Mg(2+) as cofactor.

The protein resides in the cytoplasm. The enzyme catalyses IMP + L-aspartate + GTP = N(6)-(1,2-dicarboxyethyl)-AMP + GDP + phosphate + 2 H(+). The protein operates within purine metabolism; AMP biosynthesis via de novo pathway; AMP from IMP: step 1/2. Functionally, plays an important role in the de novo pathway of purine nucleotide biosynthesis. Catalyzes the first committed step in the biosynthesis of AMP from IMP. The chain is Adenylosuccinate synthetase from Corynebacterium urealyticum (strain ATCC 43042 / DSM 7109).